Reading from the N-terminus, the 357-residue chain is Protein pelota homolog (357 aa).

This sequence belongs to the eukaryotic release factor 1 family. Pelota subfamily. In terms of assembly, monomer. It depends on a divalent metal cation as a cofactor.

It localises to the cytoplasm. May function in recognizing stalled ribosomes, interact with stem-loop structures in stalled mRNA molecules, and effect endonucleolytic cleavage of the mRNA. May play a role in the release non-functional ribosomes and degradation of damaged mRNAs. Has endoribonuclease activity. The protein is Protein pelota homolog of Thermococcus onnurineus (strain NA1).